Reading from the N-terminus, the 155-residue chain is Small ribosomal subunit protein uS7 (155 aa).

The protein belongs to the universal ribosomal protein uS7 family. Part of the 30S ribosomal subunit. Contacts proteins S9 and S11.

In terms of biological role, one of the primary rRNA binding proteins, it binds directly to 16S rRNA where it nucleates assembly of the head domain of the 30S subunit. Is located at the subunit interface close to the decoding center, probably blocks exit of the E-site tRNA. The chain is Small ribosomal subunit protein uS7 from Xanthomonas oryzae pv. oryzae (strain MAFF 311018).